The sequence spans 873 residues: Leucine--tRNA ligase (873 aa).

The 'HIGH' region signature appears at 47 to 57; it reads PYPSGKLHMGH. The 'KMSKS' region signature appears at 636–640; that stretch reads KMSKS. An ATP-binding site is contributed by Lys639.

It belongs to the class-I aminoacyl-tRNA synthetase family.

Its subcellular location is the cytoplasm. It carries out the reaction tRNA(Leu) + L-leucine + ATP = L-leucyl-tRNA(Leu) + AMP + diphosphate. This is Leucine--tRNA ligase from Acinetobacter baylyi (strain ATCC 33305 / BD413 / ADP1).